The primary structure comprises 180 residues: MANRLKEKYTNEVIPALSEKFNYTTVMAVPKVEKIVLNMGVGDAVSNAKNLEKAAAELELISGQKPLITKAKKSIAGFRLREGVAIGAKVTLRGERMYEFLDKLVTVSLPRVRDFHGVPTKSFDGRGNYTLGVKEQLIFPEINFDDVDKVRGLDIVIVTTANTDEESRELLKGLGMPFAK.

It belongs to the universal ribosomal protein uL5 family. As to quaternary structure, part of the 50S ribosomal subunit; part of the 5S rRNA/L5/L18/L25 subcomplex. Contacts the 5S rRNA and the P site tRNA. Forms a bridge to the 30S subunit in the 70S ribosome.

In terms of biological role, this is one of the proteins that bind and probably mediate the attachment of the 5S RNA into the large ribosomal subunit, where it forms part of the central protuberance. In the 70S ribosome it contacts protein S13 of the 30S subunit (bridge B1b), connecting the 2 subunits; this bridge is implicated in subunit movement. Contacts the P site tRNA; the 5S rRNA and some of its associated proteins might help stabilize positioning of ribosome-bound tRNAs. The protein is Large ribosomal subunit protein uL5 of Streptococcus uberis (strain ATCC BAA-854 / 0140J).